The sequence spans 316 residues: L-lactate dehydrogenase (316 aa).

Residues valine 15, aspartate 37, lysine 42, tyrosine 68, and glycine 82–leucine 83 contribute to the NAD(+) site. Substrate contacts are provided by residues glutamine 85, arginine 91, and asparagine 123–aspartate 126. NAD(+) contacts are provided by residues alanine 121–asparagine 123 and threonine 146. Aspartate 151–arginine 154 lines the substrate pocket. The beta-D-fructose 1,6-bisphosphate site is built by arginine 156 and histidine 171. The active-site Proton acceptor is histidine 178. Tyrosine 222 is subject to Phosphotyrosine. Position 231 (threonine 231) interacts with substrate.

This sequence belongs to the LDH/MDH superfamily. LDH family. In terms of assembly, homotetramer.

It is found in the cytoplasm. It carries out the reaction (S)-lactate + NAD(+) = pyruvate + NADH + H(+). It participates in fermentation; pyruvate fermentation to lactate; (S)-lactate from pyruvate: step 1/1. Its activity is regulated as follows. Allosterically activated by fructose 1,6-bisphosphate (FBP). Its function is as follows. Catalyzes the conversion of lactate to pyruvate. This chain is L-lactate dehydrogenase, found in Borrelia garinii subsp. bavariensis (strain ATCC BAA-2496 / DSM 23469 / PBi) (Borreliella bavariensis).